A 627-amino-acid polypeptide reads, in one-letter code: Carnitine O-acetyltransferase, mitochondrial (627 aa).

Catalysis depends on His336, which acts as the Proton acceptor. CoA is bound by residues Lys418 and 422–429 (KKFKVSPD). Residues Tyr451, Ser453, and Thr464 each contribute to the (R)-carnitine site. Gln553 contacts CoA. The Microbody targeting signal motif lies at 625–627 (PKL).

It belongs to the carnitine/choline acetyltransferase family.

The protein resides in the peroxisome. Its subcellular location is the mitochondrion inner membrane. The catalysed reaction is (R)-carnitine + acetyl-CoA = O-acetyl-(R)-carnitine + CoA. Its function is as follows. Carnitine acetylase is specific for short chain fatty acids. Carnitine acetylase seems to affect the flux through the pyruvate dehydrogenase complex. It may be involved as well in the transport of acetyl-CoA into mitochondria. This Candida tropicalis (Yeast) protein is Carnitine O-acetyltransferase, mitochondrial (CAT2).